The sequence spans 777 residues: Rho guanine nucleotide exchange factor 38 (777 aa).

Thr-34 is subject to Phosphothreonine. The disordered stretch occupies residues 35–72 (DTVVESSVSGDHSGTLRRSQSDRTEYNQKLQEKMTPQG). A compositionally biased stretch (polar residues) spans 37–52 (VVESSVSGDHSGTLRR). Positions 53–66 (SQSDRTEYNQKLQE) are enriched in basic and acidic residues. A DH domain is found at 94 to 285 (KREKIIKELI…KDINVNINEL (192 aa)). The BAR domain maps to 327-536 (LKILTRGESQ…QNQVLEEIQN (210 aa)). The region spanning 582-645 (SAEELYQAKR…YSSFLKPYNP (64 aa)) is the SH3 1 domain. The segment at 673-694 (PASDSVTGTSESSIGDSSSSLS) is disordered. The segment covering 679-694 (TGTSESSIGDSSSSLS) has biased composition (low complexity). The 64-residue stretch at 713 to 776 (VDEQIFYAVH…PANYLGKMTY (64 aa)) folds into the SH3 2 domain.

May act as a guanine-nucleotide releasing factor. In Homo sapiens (Human), this protein is Rho guanine nucleotide exchange factor 38 (ARHGEF38).